A 146-amino-acid polypeptide reads, in one-letter code: Large-conductance mechanosensitive channel (146 aa).

3 helical membrane passes run 21 to 41 (VGII…ADLI), 44 to 64 (VIGL…LGDG), and 83 to 103 (GAFI…FLLV).

The protein belongs to the MscL family. As to quaternary structure, homopentamer.

The protein resides in the cell inner membrane. Channel that opens in response to stretch forces in the membrane lipid bilayer. May participate in the regulation of osmotic pressure changes within the cell. In Cereibacter sphaeroides (strain ATCC 17025 / ATH 2.4.3) (Rhodobacter sphaeroides), this protein is Large-conductance mechanosensitive channel.